Consider the following 372-residue polypeptide: 4-hydroxy-3-methylbut-2-en-1-yl diphosphate synthase (flavodoxin) (372 aa).

4 residues coordinate [4Fe-4S] cluster: Cys-270, Cys-273, Cys-305, and Glu-312.

This sequence belongs to the IspG family. [4Fe-4S] cluster is required as a cofactor.

The catalysed reaction is (2E)-4-hydroxy-3-methylbut-2-enyl diphosphate + oxidized [flavodoxin] + H2O + 2 H(+) = 2-C-methyl-D-erythritol 2,4-cyclic diphosphate + reduced [flavodoxin]. It participates in isoprenoid biosynthesis; isopentenyl diphosphate biosynthesis via DXP pathway; isopentenyl diphosphate from 1-deoxy-D-xylulose 5-phosphate: step 5/6. Its function is as follows. Converts 2C-methyl-D-erythritol 2,4-cyclodiphosphate (ME-2,4cPP) into 1-hydroxy-2-methyl-2-(E)-butenyl 4-diphosphate. The sequence is that of 4-hydroxy-3-methylbut-2-en-1-yl diphosphate synthase (flavodoxin) from Alteromonas mediterranea (strain DSM 17117 / CIP 110805 / LMG 28347 / Deep ecotype).